The chain runs to 1034 residues: Tubulin glycylase 3D (1034 aa).

Composition is skewed to polar residues over residues 1–13 (MINS…QTLN) and 131–146 (QVNS…QNDF). 3 disordered regions span residues 1-21 (MINS…SQMD), 131-166 (QVNS…STDY), and 189-208 (LNQQ…DNSQ). Residues 151–161 (RKPKNPTTKKR) show a composition bias toward basic residues. A compositionally biased stretch (low complexity) spans 189–199 (LNQQNQQQQDL). Residues 571 to 930 (DINNVIDDEK…YGMAQKSGIK (360 aa)) form the TTL domain. Residues 741–744 (QKYI), K754, and D756 contribute to the ATP site. Positions 1002-1034 (HDQKQFSSQQANNIETYSRPQTAKSQTQSSKKL) are disordered.

It is found in the cytoplasm. Functionally, probable glycylase which modifies tubulin, generating side chains of glycine on the gamma-carboxyl groups of specific glutamate residues within the C-terminal tail of tubulin. The sequence is that of Tubulin glycylase 3D (TTLL3D) from Tetrahymena thermophila (strain SB210).